The following is a 284-amino-acid chain: RAD52 motif-containing protein 1 (284 aa).

A necessary for nuclear localization and for nucleolar accumulation in response to heat shock region spans residues 1–92 (MAELVPFAVP…KQLFQKSPVK (92 aa)). The region spanning 15–98 (KTLLVWELSS…SPVKVRLGTR (84 aa)) is the RRM domain. The interval 90–133 (PVKVRLGTRHKAVQHQALALNSSKCQELANYYFGFNGCSKRIIK) is necessary for nuclear and nucleolar localization.

In terms of assembly, homodimer. As to expression, expressed in testis.

The protein localises to the nucleus. Its subcellular location is the cytoplasm. The protein resides in the nucleolus. It localises to the PML body. It is found in the cajal body. Functionally, may confer resistance to the antitumor agent cisplatin. Binds to DNA and RNA. This is RAD52 motif-containing protein 1 (RDM1) from Homo sapiens (Human).